Reading from the N-terminus, the 591-residue chain is Aspartate--tRNA(Asp/Asn) ligase (591 aa).

E175 is an L-aspartate binding site. Positions 199-202 are aspartate; the sequence is QQFK. R221 and H453 together coordinate L-aspartate. Residue 221–223 coordinates ATP; sequence RDE. E486 lines the ATP pocket. Residue R493 coordinates L-aspartate. 538–541 contacts ATP; sequence GIDR.

This sequence belongs to the class-II aminoacyl-tRNA synthetase family. Type 1 subfamily. Homodimer.

It localises to the cytoplasm. It carries out the reaction tRNA(Asx) + L-aspartate + ATP = L-aspartyl-tRNA(Asx) + AMP + diphosphate. Functionally, aspartyl-tRNA synthetase with relaxed tRNA specificity since it is able to aspartylate not only its cognate tRNA(Asp) but also tRNA(Asn). Reaction proceeds in two steps: L-aspartate is first activated by ATP to form Asp-AMP and then transferred to the acceptor end of tRNA(Asp/Asn). This Cereibacter sphaeroides (strain KD131 / KCTC 12085) (Rhodobacter sphaeroides) protein is Aspartate--tRNA(Asp/Asn) ligase.